The sequence spans 311 residues: Mediator of RNA polymerase II transcription subunit 27 (311 aa).

A Phosphoserine modification is found at Ser-132. Lys-134 carries the post-translational modification N6-methyllysine.

This sequence belongs to the Mediator complex subunit 27 family. In terms of assembly, component of the Mediator complex, which is composed of MED1, MED4, MED6, MED7, MED8, MED9, MED10, MED11, MED12, MED13, MED13L, MED14, MED15, MED16, MED17, MED18, MED19, MED20, MED21, MED22, MED23, MED24, MED25, MED26, MED27, MED29, MED30, MED31, CCNC, CDK8 and CDC2L6/CDK11. The MED12, MED13, CCNC and CDK8 subunits form a distinct module termed the CDK8 module. Mediator containing the CDK8 module is less active than Mediator lacking this module in supporting transcriptional activation. Individual preparations of the Mediator complex lacking one or more distinct subunits have been variously termed ARC, CRSP, DRIP, PC2, SMCC and TRAP.

The protein localises to the nucleus. In terms of biological role, component of the Mediator complex, a coactivator involved in the regulated transcription of nearly all RNA polymerase II-dependent genes. Mediator functions as a bridge to convey information from gene-specific regulatory proteins to the basal RNA polymerase II transcription machinery. Mediator is recruited to promoters by direct interactions with regulatory proteins and serves as a scaffold for the assembly of a functional preinitiation complex with RNA polymerase II and the general transcription factors. In Homo sapiens (Human), this protein is Mediator of RNA polymerase II transcription subunit 27 (MED27).